The sequence spans 577 residues: Arginine--tRNA ligase (577 aa).

The 'HIGH' region motif lies at 122 to 132 (PNVAKEMHVGH).

Belongs to the class-I aminoacyl-tRNA synthetase family. As to quaternary structure, monomer.

The protein resides in the cytoplasm. The enzyme catalyses tRNA(Arg) + L-arginine + ATP = L-arginyl-tRNA(Arg) + AMP + diphosphate. The protein is Arginine--tRNA ligase of Shigella flexneri serotype 5b (strain 8401).